A 434-amino-acid chain; its full sequence is Cobyrinate a,c-diamide synthase (434 aa).

The 192-residue stretch at 239–430 folds into the GATase cobBQ-type domain; sequence KMAIAYDPAF…SHLHFSNFQL (192 aa). C320 serves as the catalytic Nucleophile.

This sequence belongs to the CobB/CbiA family. Mg(2+) is required as a cofactor.

The catalysed reaction is cob(II)yrinate + 2 L-glutamine + 2 ATP + 2 H2O = cob(II)yrinate a,c diamide + 2 L-glutamate + 2 ADP + 2 phosphate + 2 H(+). Its pathway is cofactor biosynthesis; adenosylcobalamin biosynthesis; cob(II)yrinate a,c-diamide from sirohydrochlorin (anaerobic route): step 10/10. Functionally, catalyzes the ATP-dependent amidation of the two carboxylate groups at positions a and c of cobyrinate, using either L-glutamine or ammonia as the nitrogen source. This chain is Cobyrinate a,c-diamide synthase, found in Saccharolobus solfataricus (strain ATCC 35092 / DSM 1617 / JCM 11322 / P2) (Sulfolobus solfataricus).